We begin with the raw amino-acid sequence, 366 residues long: Spermidine/putrescine import ATP-binding protein PotA (366 aa).

The ABC transporter domain occupies 14 to 247 (ISARALRKVY…PADRFVADFI (234 aa)). 49-56 (GPSGCGKT) contributes to the ATP binding site.

It belongs to the ABC transporter superfamily. Spermidine/putrescine importer (TC 3.A.1.11.1) family. In terms of assembly, the complex is composed of two ATP-binding proteins (PotA), two transmembrane proteins (PotB and PotC) and a solute-binding protein (PotD).

Its subcellular location is the cell inner membrane. It catalyses the reaction ATP + H2O + polyamine-[polyamine-binding protein]Side 1 = ADP + phosphate + polyamineSide 2 + [polyamine-binding protein]Side 1.. Its function is as follows. Part of the ABC transporter complex PotABCD involved in spermidine/putrescine import. Responsible for energy coupling to the transport system. This Ruegeria pomeroyi (strain ATCC 700808 / DSM 15171 / DSS-3) (Silicibacter pomeroyi) protein is Spermidine/putrescine import ATP-binding protein PotA.